The following is a 65-amino-acid chain: Defensin Cg-Defm (65 aa).

A signal peptide spans 1–22 (MKVFVLLTLAVLLMVSADMAFA). Beta-D-GlcNAc-(1-&gt;4)-Mur2Ac(oyl-L-Ala-gamma-D-Glu-L-Lys-D-Ala-D-Ala)-di-trans,octa-cis-undecaprenyl diphosphate contacts are provided by F24, G25, and C26. 4 disulfides stabilise this stretch: C26-C47, C33-C56, C37-C58, and C42-C61. Positions 27–30 (PGNQ) are binds to membrane interface. H36 lines the beta-D-GlcNAc-(1-&gt;4)-Mur2Ac(oyl-L-Ala-gamma-D-Glu-L-Lys-D-Ala-D-Ala)-di-trans,octa-cis-undecaprenyl diphosphate pocket. The interval 48–54 (DAATLWL) is binds to membrane interface. C56 provides a ligand contact to beta-D-GlcNAc-(1-&gt;4)-Mur2Ac(oyl-L-Ala-gamma-D-Glu-L-Lys-D-Ala-D-Ala)-di-trans,octa-cis-undecaprenyl diphosphate.

It belongs to the invertebrate defensin family. As to expression, expressed in the mantle. Low or no expression in most of the organs analyzed, including hemocytes, heart, digestive gland, and gills.

Its subcellular location is the secreted. It localises to the target cell membrane. Antibacterial peptide mostly active against Gram-positive bacteria (M.lysodeikticus, S.aureus, and the marine bacteria, B.stationis, and M.maritypicum). It acts by selectively inhibiting peptidoglycan biosynthesis through complex formation with the cell wall precursor lipid II (1:1 molar ratio) thus inhibiting cell wall synthesis. It does not disrupt cell membranes. Is noticeably more potent than Cg-Defh1. It shows no or limited activities against Gram-negative bacteria and filamentous fungi. This chain is Defensin Cg-Defm, found in Magallana gigas (Pacific oyster).